The following is a 359-amino-acid chain: MNIYDQLQAVEDRYEELGELLSDPDVVSDTKRFMELSREEANTRETVTAYREYKQVIQTISDAEEMIKDASGDPELEEMAKEELKESKAAKEEYEEKLKILLLPKDPNDDKNIILEIRGAAGGDEAALFAGDLLTMYQKYAETQGWRFEVMESSVNGVGGIKEVVAMVSGQSVYSKLKYESGAHRVQRVPVTESQGRVHTSTATVLVMPEVEEVEYDIDQKDLRVDIYHASGAGGQNVNKVATAVRMVHIPTGIKVEMQEERTQQKNRDKAMKIIRARVADHFAQIAQDEQDAERKSTVGTGDRSERIRTYNFPQNRVTDHRIGLTLQKLDTILSGKMDEVIDALVMYDQTKKLESLNN.

The residue at position 236 (glutamine 236) is an N5-methylglutamine.

This sequence belongs to the prokaryotic/mitochondrial release factor family. In terms of processing, methylated by PrmC. Methylation increases the termination efficiency of RF1.

It is found in the cytoplasm. In terms of biological role, peptide chain release factor 1 directs the termination of translation in response to the peptide chain termination codons UAG and UAA. This chain is Peptide chain release factor 1, found in Streptococcus pyogenes serotype M12 (strain MGAS2096).